A 1098-amino-acid chain; its full sequence is Protein diaphanous homolog 2 (1098 aa).

Met-1 is modified (N-acetylmethionine). Residues 1-62 (MEELGAAASG…SFRKSATKRE (62 aa)) form a disordered region. Residues 36-52 (ANEEETRNKPKLRDRIT) are compositionally biased toward basic and acidic residues. Residues 90-463 (SLILSEKEVL…QIVLHCSGMD (374 aa)) enclose the GBD/FH3 domain. 2 coiled-coil regions span residues 375–416 (QLRV…NMLK) and 490–539 (EENE…GQGV). Disordered stretches follow at residues 537–565 (QGVPSAIPGPPPPPPLPGAGPCPPPPPPP), 578–611 (PPPPLPGMPGIPPPPPPPLSGVPPPPPPPGGVFP), 679–699 (MKGQRNTEAAEENRSGPPKKK), 1007–1047 (HKRK…NKEG), and 1063–1098 (GAAFRDRRKRIPRNPDNRRPPLERSRSRHNGAMSSK). Composition is skewed to pro residues over residues 543 to 565 (IPGPPPPPPLPGAGPCPPPPPPP) and 578 to 608 (PPPPLPGMPGIPPPPPPPLSGVPPPPPPPGG). The region spanning 544–620 (PGPPPPPPLP…PLLSGPIELP (77 aa)) is the FH1 domain. The FH2 domain occupies 625–1025 (QKKLYKPDIP…SRRAKLAKEK (401 aa)). Residues 999–1050 (FLEALKENHKRKEMEEKSRRAKLAKEKAEQEKLERQKKKKQLIDINKEGDET) adopt a coiled-coil conformation. Composition is skewed to basic and acidic residues over residues 1007–1032 (HKRKEMEEKSRRAKLAKEKAEQEKLE) and 1075–1087 (RNPDNRRPPLERS). Residues 1048–1078 (DETGVMDNLLEALQSGAAFRDRRKRIPRNPD) enclose the DAD domain.

The protein belongs to the formin homology family. Diaphanous subfamily. In terms of assembly, interacts with MAPRE1 and APC.

In terms of biological role, may be involved in oogenesis. This chain is Protein diaphanous homolog 2 (Diaph2), found in Mus musculus (Mouse).